The sequence spans 239 residues: Ribonuclease PH (239 aa).

Phosphate contacts are provided by residues Arg86 and 124–126; that span reads GTR.

Belongs to the RNase PH family. In terms of assembly, homohexameric ring arranged as a trimer of dimers.

It carries out the reaction tRNA(n+1) + phosphate = tRNA(n) + a ribonucleoside 5'-diphosphate. Phosphorolytic 3'-5' exoribonuclease that plays an important role in tRNA 3'-end maturation. Removes nucleotide residues following the 3'-CCA terminus of tRNAs; can also add nucleotides to the ends of RNA molecules by using nucleoside diphosphates as substrates, but this may not be physiologically important. Probably plays a role in initiation of 16S rRNA degradation (leading to ribosome degradation) during starvation. The chain is Ribonuclease PH from Rhizobium leguminosarum bv. trifolii (strain WSM2304).